We begin with the raw amino-acid sequence, 271 residues long: Signal recognition particle receptor subunit beta (271 aa).

A helical transmembrane segment spans residues 37-57; sequence LLSVVVAVLAVLLTLVFWKLI. Residues 71 to 79 and 92 to 95 contribute to the GTP site; these read GLCDSGKTL and TQTS. Serine 112 carries the post-translational modification Phosphoserine. GTP is bound at residue glycine 120. A Phosphothreonine modification is found at threonine 214. Position 248 (alanine 248) interacts with GTP.

The protein belongs to the SRP receptor beta subunit family. In terms of assembly, heterodimer with SRPRA.

Its subcellular location is the endoplasmic reticulum membrane. Its function is as follows. Component of the signal recognition particle (SRP) complex receptor (SR). Ensures, in conjunction with the SRP complex, the correct targeting of the nascent secretory proteins to the endoplasmic reticulum membrane system. May mediate the membrane association of SR. This Homo sapiens (Human) protein is Signal recognition particle receptor subunit beta (SRPRB).